Consider the following 188-residue polypeptide: MGIKSDRWIRKMAREHGMIEPFEPHQVRHGDCSSVISYGTSSYGYDVRCSNEFKIFTNINSAIVDPKNFDQNSFVDLVSDVCIIPPNSFALARTVEYFRIPRDVLTICLGKSTYARCGIIVNVTPLEPEWEGHVTLEFSNTTPLPAKIYANEGVAQVLFLGADDVCETSYRDRSGKYQGQTGVTLPKA.

DCTP is bound by residues 111-116 (KSTYAR), 135-137 (TLE), Gln-156, Tyr-170, and Gln-180. The Proton donor/acceptor role is filled by Glu-137.

Belongs to the dCTP deaminase family. In terms of assembly, homotrimer.

It catalyses the reaction dCTP + H2O + H(+) = dUTP + NH4(+). Its pathway is pyrimidine metabolism; dUMP biosynthesis; dUMP from dCTP (dUTP route): step 1/2. Functionally, catalyzes the deamination of dCTP to dUTP. The protein is dCTP deaminase of Methylococcus capsulatus (strain ATCC 33009 / NCIMB 11132 / Bath).